The sequence spans 60 residues: Large ribosomal subunit protein bL32 (60 aa).

Belongs to the bacterial ribosomal protein bL32 family.

The polypeptide is Large ribosomal subunit protein bL32 (Fervidobacterium nodosum (strain ATCC 35602 / DSM 5306 / Rt17-B1)).